We begin with the raw amino-acid sequence, 137 residues long: Transcription antitermination protein NusB (137 aa).

It belongs to the NusB family.

Its function is as follows. Involved in transcription antitermination. Required for transcription of ribosomal RNA (rRNA) genes. Binds specifically to the boxA antiterminator sequence of the ribosomal RNA (rrn) operons. In Finegoldia magna (strain ATCC 29328 / DSM 20472 / WAL 2508) (Peptostreptococcus magnus), this protein is Transcription antitermination protein NusB.